The chain runs to 140 residues: ATP synthase epsilon chain (140 aa).

It belongs to the ATPase epsilon chain family. F-type ATPases have 2 components, CF(1) - the catalytic core - and CF(0) - the membrane proton channel. CF(1) has five subunits: alpha(3), beta(3), gamma(1), delta(1), epsilon(1). CF(0) has three main subunits: a, b and c.

The protein localises to the cell membrane. Functionally, produces ATP from ADP in the presence of a proton gradient across the membrane. In Enterococcus hirae (strain ATCC 9790 / DSM 20160 / JCM 8729 / LMG 6399 / NBRC 3181 / NCIMB 6459 / NCDO 1258 / NCTC 12367 / WDCM 00089 / R), this protein is ATP synthase epsilon chain (atpC).